The following is a 590-amino-acid chain: CTP synthase (590 aa).

An amidoligase domain region spans residues 1-278 (MRKHPQSATK…DAFVVRRLNL (278 aa)). A CTP-binding site is contributed by Ser-20. Residue Ser-20 coordinates UTP. Residues 21 to 26 (SLGKGL) and Asp-78 contribute to the ATP site. Mg(2+)-binding residues include Asp-78 and Glu-152. Residues 159–161 (DIE), 199–204 (KTKPTQ), and Lys-235 each bind CTP. UTP is bound by residues 199 to 204 (KTKPTQ) and Lys-235. The Glutamine amidotransferase type-1 domain occupies 303 to 551 (RIALVGKYVD…VGAAIDYKSA (249 aa)). Residue Gly-366 coordinates L-glutamine. The Nucleophile; for glutamine hydrolysis role is filled by Cys-393. L-glutamine is bound by residues 394–397 (LGLQ), Glu-416, and Arg-477. Residues His-524 and Glu-526 contribute to the active site. The interval 566–590 (EHLPNSSNQHRDGVERSFPAPAARG) is disordered.

It belongs to the CTP synthase family. As to quaternary structure, homotetramer.

It carries out the reaction UTP + L-glutamine + ATP + H2O = CTP + L-glutamate + ADP + phosphate + 2 H(+). The enzyme catalyses L-glutamine + H2O = L-glutamate + NH4(+). It catalyses the reaction UTP + NH4(+) + ATP = CTP + ADP + phosphate + 2 H(+). It functions in the pathway pyrimidine metabolism; CTP biosynthesis via de novo pathway; CTP from UDP: step 2/2. Allosterically activated by GTP, when glutamine is the substrate; GTP has no effect on the reaction when ammonia is the substrate. The allosteric effector GTP functions by stabilizing the protein conformation that binds the tetrahedral intermediate(s) formed during glutamine hydrolysis. Inhibited by the product CTP, via allosteric rather than competitive inhibition. Catalyzes the ATP-dependent amination of UTP to CTP with either L-glutamine or ammonia as the source of nitrogen. Regulates intracellular CTP levels through interactions with the four ribonucleotide triphosphates. This is CTP synthase from Mycobacterium leprae (strain Br4923).